The following is a 241-amino-acid chain: Uridylate kinase (241 aa).

Residue 15-18 coordinates ATP; it reads KLSG. Residues 23–28 form an involved in allosteric activation by GTP region; the sequence is GAEGFG. G57 is a binding site for UMP. The ATP site is built by G58 and R62. UMP-binding positions include D77 and 138–145; that span reads TGNPFFTT. ATP-binding residues include T165, Y171, and D174.

The protein belongs to the UMP kinase family. Homohexamer.

It localises to the cytoplasm. The catalysed reaction is UMP + ATP = UDP + ADP. It participates in pyrimidine metabolism; CTP biosynthesis via de novo pathway; UDP from UMP (UMPK route): step 1/1. Its activity is regulated as follows. Allosterically activated by GTP. Inhibited by UTP. In terms of biological role, catalyzes the reversible phosphorylation of UMP to UDP. This chain is Uridylate kinase, found in Yersinia pseudotuberculosis serotype O:1b (strain IP 31758).